A 78-amino-acid chain; its full sequence is Large ribosomal subunit protein bL28 (78 aa).

The protein belongs to the bacterial ribosomal protein bL28 family.

This is Large ribosomal subunit protein bL28 from Synechococcus sp. (strain JA-2-3B'a(2-13)) (Cyanobacteria bacterium Yellowstone B-Prime).